The following is a 316-amino-acid chain: Probable cell division protein WhiA (316 aa).

Residues 275 to 309 (TLKELGEMVASGKISKSGINHRLRKLDEIAEQLRT) constitute a DNA-binding region (H-T-H motif).

This sequence belongs to the WhiA family.

It localises to the cytoplasm. It is found in the nucleoid. Functionally, involved in cell division and chromosome segregation. May influence the activity of FtsZ. Binds DNA, but does not seem to function as a transcription factor. This Bacillus subtilis (strain 168) protein is Probable cell division protein WhiA.